Here is a 107-residue protein sequence, read N- to C-terminus: UPF0213 protein SG0387 (107 aa).

The GIY-YIG domain maps to 4–79 (SLWHLYLIRT…KQLSRAQKEH (76 aa)).

This sequence belongs to the UPF0213 family.

The chain is UPF0213 protein SG0387 from Sodalis glossinidius (strain morsitans).